The sequence spans 507 residues: Sterol 14-alpha demethylase CYP51A (507 aa).

The helical transmembrane segment at Tyr7–Pro29 threads the bilayer. Tyr105 is a lanosterol binding site. Cys449 lines the heme pocket.

The protein belongs to the cytochrome P450 family. Heme is required as a cofactor.

The protein resides in the endoplasmic reticulum membrane. The enzyme catalyses a 14alpha-methyl steroid + 3 reduced [NADPH--hemoprotein reductase] + 3 O2 = a Delta(14) steroid + formate + 3 oxidized [NADPH--hemoprotein reductase] + 4 H2O + 4 H(+). The catalysed reaction is a 14alpha-methyl steroid + reduced [NADPH--hemoprotein reductase] + O2 = a 14alpha-hydroxymethyl steroid + oxidized [NADPH--hemoprotein reductase] + H2O + H(+). It catalyses the reaction a 14alpha-hydroxymethyl steroid + reduced [NADPH--hemoprotein reductase] + O2 = a 14alpha-formyl steroid + oxidized [NADPH--hemoprotein reductase] + 2 H2O + H(+). It carries out the reaction a 14alpha-formyl steroid + reduced [NADPH--hemoprotein reductase] + O2 = a Delta(14) steroid + formate + oxidized [NADPH--hemoprotein reductase] + H2O + 2 H(+). The enzyme catalyses lanosterol + 3 reduced [NADPH--hemoprotein reductase] + 3 O2 = 4,4-dimethyl-5alpha-cholesta-8,14,24-trien-3beta-ol + formate + 3 oxidized [NADPH--hemoprotein reductase] + 4 H2O + 4 H(+). The catalysed reaction is lanosterol + reduced [NADPH--hemoprotein reductase] + O2 = 32-hydroxylanosterol + oxidized [NADPH--hemoprotein reductase] + H2O + H(+). It catalyses the reaction 32-hydroxylanosterol + reduced [NADPH--hemoprotein reductase] + O2 = 32-oxolanosterol + oxidized [NADPH--hemoprotein reductase] + 2 H2O + H(+). It carries out the reaction 32-oxolanosterol + reduced [NADPH--hemoprotein reductase] + O2 = 4,4-dimethyl-5alpha-cholesta-8,14,24-trien-3beta-ol + formate + oxidized [NADPH--hemoprotein reductase] + H2O + 2 H(+). The enzyme catalyses eburicol + 3 reduced [NADPH--hemoprotein reductase] + 3 O2 = 14-demethyleburicol + formate + 3 oxidized [NADPH--hemoprotein reductase] + 4 H2O + 4 H(+). The catalysed reaction is eburicol + reduced [NADPH--hemoprotein reductase] + O2 = 32-hydroxyeburicol + oxidized [NADPH--hemoprotein reductase] + H2O + H(+). It catalyses the reaction 32-hydroxyeburicol + reduced [NADPH--hemoprotein reductase] + O2 = 32-oxoeburicol + oxidized [NADPH--hemoprotein reductase] + 2 H2O + H(+). It carries out the reaction 32-oxoeburicol + reduced [NADPH--hemoprotein reductase] + O2 = 14-demethyleburicol + formate + oxidized [NADPH--hemoprotein reductase] + H2O + 2 H(+). Its pathway is steroid metabolism; ergosterol biosynthesis. Together with cyp51B and cyp51C, encodes the sterol 14alpha-demethylase that plays a critical role in the third module of ergosterol biosynthesis pathway, being ergosterol the major sterol component in fungal membranes that participates in a variety of functions. CYP51A encodes the sterol 14-alpha-demethylase induced on ergosterol depletion and is responsible for the intrinsic variation in azole sensitivity. The third module or late pathway involves the ergosterol synthesis itself through consecutive reactions that mainly occur in the endoplasmic reticulum (ER) membrane. In filamentous fungi, during the initial step of this module, lanosterol (lanosta-8,24-dien-3beta-ol) can be metabolized to eburicol. Sterol 14alpha-demethylase catalyzes the three-step oxidative removal of the 14alpha-methyl group (C-32) of both these sterols in the form of formate, and converts eburicol and lanosterol to 14-demethyleburicol (4,4,24-trimethylergosta-8,14,24(28)-trienol) and 4,4-dimethyl-5alpha-cholesta-8,14,24-trien-3beta-ol, respectively, which are further metabolized by other enzymes in the pathway to ergosterol. Can also use substrates not intrinsic to fungi, such as 24,25-dihydrolanosterol (DHL), producing 4,4'-dimethyl-8,14-cholestadien-3-beta-ol, but at lower rates than the endogenous substrates. The protein is Sterol 14-alpha demethylase CYP51A of Gibberella zeae (strain ATCC MYA-4620 / CBS 123657 / FGSC 9075 / NRRL 31084 / PH-1) (Wheat head blight fungus).